We begin with the raw amino-acid sequence, 460 residues long: C4-dicarboxylate transport protein (460 aa).

9 helical membrane passes run 20-40 (SLYFQVIVAIVIGILIGHFYP), 56-76 (LIKMVIAPIIFCTVVSGIAGM), 88-108 (YALLYFEIVSTIALLIGLIVV), 153-173 (IVGAFANGDILQVLMFSVIFG), 200-220 (IINMIMKLAPIGAFGAMAFTI), 234-254 (LMICFYITCALFVVLVLGAIC), 301-321 (VVGLVIPTGYSFNLDGTSIYL), 342-362 (ITLLLVLLLSSKGAAGVTGSG), and 364-384 (IVLAATLSAVGHLPVAGLALI). The disordered stretch occupies residues 438–460 (PEDDLGVAEGPTPANAVNTTKTV).

Belongs to the dicarboxylate/amino acid:cation symporter (DAACS) (TC 2.A.23) family.

It is found in the cell inner membrane. Responsible for the transport of dicarboxylates such as succinate, fumarate, and malate from the periplasm across the membrane. This is C4-dicarboxylate transport protein from Pseudomonas savastanoi pv. phaseolicola (strain 1448A / Race 6) (Pseudomonas syringae pv. phaseolicola (strain 1448A / Race 6)).